The following is a 425-amino-acid chain: Enolase (425 aa).

(2R)-2-phosphoglycerate is bound at residue glutamine 162. Glutamate 204 acts as the Proton donor in catalysis. Mg(2+)-binding residues include aspartate 241, glutamate 284, and aspartate 311. Residues lysine 336, arginine 365, serine 366, and lysine 387 each coordinate (2R)-2-phosphoglycerate. Catalysis depends on lysine 336, which acts as the Proton acceptor.

This sequence belongs to the enolase family. Mg(2+) serves as cofactor.

It is found in the cytoplasm. Its subcellular location is the secreted. The protein resides in the cell surface. The catalysed reaction is (2R)-2-phosphoglycerate = phosphoenolpyruvate + H2O. It participates in carbohydrate degradation; glycolysis; pyruvate from D-glyceraldehyde 3-phosphate: step 4/5. Catalyzes the reversible conversion of 2-phosphoglycerate (2-PG) into phosphoenolpyruvate (PEP). It is essential for the degradation of carbohydrates via glycolysis. This is Enolase from Brucella anthropi (strain ATCC 49188 / DSM 6882 / CCUG 24695 / JCM 21032 / LMG 3331 / NBRC 15819 / NCTC 12168 / Alc 37) (Ochrobactrum anthropi).